Reading from the N-terminus, the 488-residue chain is MNTQLINNQWQAGQGPAFASINPSNGETIWQGNGASAEQVNSAIKAARAAQLQWADTPLEQRITILENFAAQLKEHSEEFAVIIAQETGKPLWETRTEVGAMTGKVAISVKAYNERTGTTENPMPGAKAFIRHKPHGVVAIFGPYNFPGHLPNGHIVPAILAGNTVVFKPSELTPHVAQFTLSLWLKAGLPAGVINLVQGEIETGKALAAHQDIDGLFFTGSSNTGHLLHKQFAGHPGKILALEMGGNNPLIIKDVNDVSAAVHDIIQSGFITSGQRCTCARRVFIENSSNGDAILAKLISATKNIVVDDSFATEQPFMGAMISEKAALGMVAAQNELVAKGAEVLVELKQLKPGTGFVSPGIIDVTNVNDMPDEEHFGPLIKIYRYSDFDSAINEANNTSFGLSAGLLADSENDYNHFLKRIRAGIVNWNRPITGASSAAPFGGIGASGNHRASAYYAADYCAYPVASVESDKVTLPQTLAPGLIIE.

221–226 (GSSNTG) provides a ligand contact to NAD(+). Active-site residues include glutamate 244 and cysteine 278.

This sequence belongs to the aldehyde dehydrogenase family. AstD subfamily.

The catalysed reaction is N-succinyl-L-glutamate 5-semialdehyde + NAD(+) + H2O = N-succinyl-L-glutamate + NADH + 2 H(+). It participates in amino-acid degradation; L-arginine degradation via AST pathway; L-glutamate and succinate from L-arginine: step 4/5. Catalyzes the NAD-dependent reduction of succinylglutamate semialdehyde into succinylglutamate. This is N-succinylglutamate 5-semialdehyde dehydrogenase 2 from Pseudoalteromonas translucida (strain TAC 125).